Consider the following 382-residue polypeptide: Mannitol-1-phosphate 5-dehydrogenase (382 aa).

NAD(+) is bound at residue 3–14; the sequence is ALHFGAGNIGRG.

This sequence belongs to the mannitol dehydrogenase family.

It catalyses the reaction D-mannitol 1-phosphate + NAD(+) = beta-D-fructose 6-phosphate + NADH + H(+). This Salmonella newport (strain SL254) protein is Mannitol-1-phosphate 5-dehydrogenase.